Consider the following 78-residue polypeptide: Large ribosomal subunit protein bL28 (78 aa).

It belongs to the bacterial ribosomal protein bL28 family.

In Aromatoleum aromaticum (strain DSM 19018 / LMG 30748 / EbN1) (Azoarcus sp. (strain EbN1)), this protein is Large ribosomal subunit protein bL28.